The sequence spans 330 residues: MKIAVAGGGSWGSALAHLLAANACDVTLLVRDAVQARRINADHVNPDYLPDVVLHSSVRATVDDAEALDGAGLLLMAVPCQHFRKVLQRLRPLLPPEPVVVCANKGIEVENLCTVSEVVAQELEGTGHTFAMLSGPSFAVEVMRDMPTAVVLGCRDAATGRRLRHIFSYGLFRTYSSTDVRGVELGGAVKNVIAIAAGLADGLGFGHNARAALITRGLAEMSRLGVAMGARASTFMGLSGMGDLVLTCTGDLSRNRQVGLKLAQGMTLEEVTRSMRMVAEGVKTTEAVHTLAARLQVDLPITSAMYDVLHSGKNPRDAVRELMSRELKEE.

NADPH contacts are provided by S10, W11, R31, and K105. K105, G135, and S137 together coordinate sn-glycerol 3-phosphate. A139 provides a ligand contact to NADPH. K190, D243, S253, R254, and N255 together coordinate sn-glycerol 3-phosphate. K190 serves as the catalytic Proton acceptor. Residue R254 coordinates NADPH. NADPH contacts are provided by V278 and E280.

Belongs to the NAD-dependent glycerol-3-phosphate dehydrogenase family.

It localises to the cytoplasm. It carries out the reaction sn-glycerol 3-phosphate + NAD(+) = dihydroxyacetone phosphate + NADH + H(+). It catalyses the reaction sn-glycerol 3-phosphate + NADP(+) = dihydroxyacetone phosphate + NADPH + H(+). Its pathway is membrane lipid metabolism; glycerophospholipid metabolism. Functionally, catalyzes the reduction of the glycolytic intermediate dihydroxyacetone phosphate (DHAP) to sn-glycerol 3-phosphate (G3P), the key precursor for phospholipid synthesis. The sequence is that of Glycerol-3-phosphate dehydrogenase [NAD(P)+] from Oleidesulfovibrio alaskensis (strain ATCC BAA-1058 / DSM 17464 / G20) (Desulfovibrio alaskensis).